The primary structure comprises 66 residues: UPF0337 protein SAG0606 (66 aa).

Residues Met-1 to Val-10 show a composition bias toward basic and acidic residues. The tract at residues Met-1–Lys-23 is disordered.

Belongs to the UPF0337 (CsbD) family.

In Streptococcus agalactiae serotype V (strain ATCC BAA-611 / 2603 V/R), this protein is UPF0337 protein SAG0606.